The chain runs to 110 residues: Endoribonuclease SymE (110 aa).

One can recognise a SpoVT-AbrB domain in the interval 29 to 74; the sequence is SRYPEYTRIPAITLKGQWLEDAGFTTGTQVDVRVMNGCIVLTAQQP.

The protein belongs to the SymE family.

It is found in the cytoplasm. Involved in the degradation and recycling of damaged RNA. It is itself a target for degradation by the ATP-dependent protease Lon. The chain is Endoribonuclease SymE from Salmonella paratyphi C (strain RKS4594).